The sequence spans 317 residues: Melanocyte-stimulating hormone receptor (317 aa).

Over methionine 1 to glutamate 37 the chain is Extracellular. An N-linked (GlcNAc...) asparagine glycan is attached at asparagine 29. A helical transmembrane segment spans residues valine 38–isoleucine 63. The Cytoplasmic segment spans residues alanine 64–proline 72. A helical transmembrane segment spans residues methionine 73–leucine 93. The Extracellular portion of the chain corresponds to glutamate 94–asparagine 118. Residues valine 119 to valine 140 traverse the membrane as a helical segment. Over aspartate 141–arginine 163 the chain is Cytoplasmic. Residues isoleucine 164–tyrosine 183 form a helical membrane-spanning segment. Residues asparagine 184 to cysteine 191 are Extracellular-facing. Residues leucine 192 to leucine 211 form a helical membrane-spanning segment. At alanine 212–alanine 240 the chain is on the cytoplasmic side. A helical transmembrane segment spans residues alanine 241 to leucine 266. At cysteine 267 to asparagine 279 the chain is on the extracellular side. A helical membrane pass occupies residues phenylalanine 280 to phenylalanine 300. Residues arginine 301 to tryptophan 317 are Cytoplasmic-facing. Cysteine 315 carries S-palmitoyl cysteine lipidation.

Belongs to the G-protein coupled receptor 1 family. Interacts with MGRN1, but does not undergo MGRN1-mediated ubiquitination; this interaction competes with GNAS-binding and thus inhibits agonist-induced cAMP production. Interacts with OPN3; the interaction results in a decrease in MC1R-mediated cAMP signaling and ultimately a decrease in melanin production in melanocytes.

The protein resides in the cell membrane. Functionally, receptor for MSH (alpha, beta and gamma) and ACTH. The activity of this receptor is mediated by G proteins which activate adenylate cyclase. Mediates melanogenesis, the production of eumelanin (black/brown) and phaeomelanin (red/yellow), via regulation of cAMP signaling in melanocytes. This Capra hircus (Goat) protein is Melanocyte-stimulating hormone receptor (MC1R).